Reading from the N-terminus, the 423-residue chain is Innexin eat-5 (423 aa).

4 helical membrane-spanning segments follow: residues 25–41 (YYYS…TITA), 102–122 (PFIM…WSML), 277–297 (IFLF…FDSI), and 341–361 (HSIL…IILL).

Belongs to the pannexin family. As to quaternary structure, heterooligomer of eat-5 and another innexin. Expressed in pharyngeal muscles.

It localises to the cell membrane. The protein localises to the cell junction. The protein resides in the gap junction. Functionally, structural component of the gap junctions. Required for synchronized pharyngeal muscle contractions. This Caenorhabditis elegans protein is Innexin eat-5 (eat-5).